The following is a 324-amino-acid chain: Ribosomal RNA small subunit methyltransferase H (324 aa).

S-adenosyl-L-methionine contacts are provided by residues 40–42, aspartate 60, leucine 94, aspartate 108, and histidine 115; that span reads AGH. Positions 301–324 are disordered; sequence EEMKVNTRSRSAKLRVAERTGEDG. Positions 315 to 324 are enriched in basic and acidic residues; that stretch reads RVAERTGEDG.

The protein belongs to the methyltransferase superfamily. RsmH family.

The protein resides in the cytoplasm. It carries out the reaction cytidine(1402) in 16S rRNA + S-adenosyl-L-methionine = N(4)-methylcytidine(1402) in 16S rRNA + S-adenosyl-L-homocysteine + H(+). In terms of biological role, specifically methylates the N4 position of cytidine in position 1402 (C1402) of 16S rRNA. The chain is Ribosomal RNA small subunit methyltransferase H from Maridesulfovibrio salexigens (strain ATCC 14822 / DSM 2638 / NCIMB 8403 / VKM B-1763) (Desulfovibrio salexigens).